The chain runs to 72 residues: UPF0270 protein KPN78578_37030 (72 aa).

Belongs to the UPF0270 family.

This Klebsiella pneumoniae subsp. pneumoniae (strain ATCC 700721 / MGH 78578) protein is UPF0270 protein KPN78578_37030.